A 20-amino-acid chain; its full sequence is Cytochrome P450 2A7 (20 aa).

This sequence belongs to the cytochrome P450 family. It depends on heme as a cofactor.

Its subcellular location is the endoplasmic reticulum membrane. It localises to the microsome membrane. The enzyme catalyses an organic molecule + reduced [NADPH--hemoprotein reductase] + O2 = an alcohol + oxidized [NADPH--hemoprotein reductase] + H2O + H(+). Functionally, exhibits a high coumarin 7-hydroxylase activity. This chain is Cytochrome P450 2A7 (CYP2A7), found in Papio sp. (Baboon).